Here is a 164-residue protein sequence, read N- to C-terminus: UPF0304 protein PM1500 (164 aa).

The protein belongs to the UPF0304 family.

The polypeptide is UPF0304 protein PM1500 (Pasteurella multocida (strain Pm70)).